The following is a 361-amino-acid chain: uncharacterized protein (361 aa).

Disordered stretches follow at residues 53–75 (KNISNNNNNNNNNNNNVCGNINN) and 150–211 (NYNN…YHHY). Residues 150–198 (NYNNYNNNNNNNNNNNNNNNNNNNNNNNNNNNNNNKNNNKNNNNKPNNF) show a composition bias toward low complexity. Positions 199-211 (IHHHHHHHHYHHY) are enriched in basic residues. The helical transmembrane segment at 225–245 (IFIGLMAFLILFILMVIGLLI) threads the bilayer.

Its subcellular location is the membrane. This is an uncharacterized protein from Dictyostelium discoideum (Social amoeba).